Reading from the N-terminus, the 761-residue chain is 3'-5' RNA nuclease TATDN2 (761 aa).

Disordered regions lie at residues M1–G90, C135–Q181, K197–V294, K318–E337, R343–T364, and S388–H486. 2 stretches are compositionally biased toward low complexity: residues A33–P52 and S66–S85. The span at Q247–V294 shows a compositional bias: basic and acidic residues. The segment covering S388–S402 has biased composition (low complexity). Positions S417–S431 are enriched in polar residues. The segment covering R452–P470 has biased composition (basic and acidic residues). Residues H499, H501, E593, H630, H655, and D707 each contribute to the a divalent metal cation site.

Belongs to the metallo-dependent hydrolases superfamily. TatD-type hydrolase family. Mg(2+) is required as a cofactor.

Its subcellular location is the nucleus. Mg(2+)-dependent 3'RNA exonuclease and endonuclease that resolves R-loops via specific degradation of R-loop RNA stucture. Shows no activity against D-loop and minimal activity against the RNA strand of an RNA-DNA hybrid duplex oligomer. Has no 3' or 5' exonuclease activity, no uracil glycosylase activity, and no 5' flap endonuclease activity on DNA substrates. May have a role in maintaining genomic stability through its role in R-loop resolution. This Homo sapiens (Human) protein is 3'-5' RNA nuclease TATDN2 (TATDN2).